We begin with the raw amino-acid sequence, 727 residues long: Glucans biosynthesis glucosyltransferase H (727 aa).

A disordered region spans residues 18–38; the sequence is SAMPNERPGAMEPQNLSKMPE. The next 7 membrane-spanning stretches (helical) occupy residues 58–78, 97–117, 278–298, 408–428, 460–480, 496–516, and 572–592; these read FLVVGGALLLSLFAIYEMGAV, VNFCWIALAFCSGIAGFLILL, LQQFAARIYGPVIGTGLGWWV, IMAYLSSPFWLMLILTGLMLA, LFYITMGVLFGPKVFGVLLLL, IFSVIFEVILSALIAPIMMFI, and LLAWMSPALIGLWIAVPISAW.

The protein belongs to the glycosyltransferase 2 family. OpgH subfamily.

The protein localises to the cell inner membrane. It participates in glycan metabolism; osmoregulated periplasmic glucan (OPG) biosynthesis. Its function is as follows. Involved in the biosynthesis of osmoregulated periplasmic glucans (OPGs). This is Glucans biosynthesis glucosyltransferase H from Shewanella baltica (strain OS185).